A 201-amino-acid chain; its full sequence is IMP cyclohydrolase (201 aa).

The protein belongs to the archaeal IMP cyclohydrolase family.

It carries out the reaction IMP + H2O = 5-formamido-1-(5-phospho-D-ribosyl)imidazole-4-carboxamide. The protein operates within purine metabolism; IMP biosynthesis via de novo pathway; IMP from 5-formamido-1-(5-phospho-D-ribosyl)imidazole-4-carboxamide: step 1/1. Its function is as follows. Catalyzes the cyclization of 5-formylamidoimidazole-4-carboxamide ribonucleotide to IMP. The polypeptide is IMP cyclohydrolase (Methanococcus maripaludis (strain C5 / ATCC BAA-1333)).